The primary structure comprises 150 residues: MAKLILTHEVTGLGAAGDVVEVKDGYARNFLLPRNFALTWTKGGEKQVESIKAARAAREHASLEDAQKQAAALQSKPVQLVVKAGETGRLFGTVKQADVANAVEAAGLGSIDKRKVELPVHIKSVGSYQANVRLHEDVAAVIELDVVAGK.

Belongs to the bacterial ribosomal protein bL9 family.

Its function is as follows. Binds to the 23S rRNA. The protein is Large ribosomal subunit protein bL9 of Pseudarthrobacter chlorophenolicus (strain ATCC 700700 / DSM 12829 / CIP 107037 / JCM 12360 / KCTC 9906 / NCIMB 13794 / A6) (Arthrobacter chlorophenolicus).